The chain runs to 383 residues: Meiotic recombination protein SPO11-2 (383 aa).

One can recognise a Topo IIA-type catalytic domain in the interval 24-167; it reads LLPHEARARI…LGIMASSRGL (144 aa). Y124 (O-(5'-phospho-DNA)-tyrosine intermediate) is an active-site residue. Mg(2+)-binding residues include E217 and D270.

This sequence belongs to the TOP6A family. In terms of assembly, heterotetramer of 2 SPO11 (SPO11-1 and/or SPO11-2) and 2 MTOPVIB chains. Interacts with MTOPVIB. May form a heterodimer with SPO11-1. Interacts with PRD1. Does not interact with TOP6B. Mg(2+) is required as a cofactor. In terms of tissue distribution, very low expression in flowers and shoots.

The protein localises to the nucleus. It carries out the reaction ATP-dependent breakage, passage and rejoining of double-stranded DNA.. Its function is as follows. Component of a topoisomerase 6 complex specifically required for meiotic recombination. Together with MTOPVIB, mediates DNA cleavage that forms the double-strand breaks (DSB) that initiate meiotic recombination. The complex promotes relaxation of negative and positive supercoiled DNA and DNA decatenation through cleavage and ligation cycles. The polypeptide is Meiotic recombination protein SPO11-2 (SPO11-2) (Arabidopsis thaliana (Mouse-ear cress)).